The chain runs to 137 residues: uncharacterized protein (137 aa).

The N-terminal stretch at 1-21 is a signal peptide; the sequence is MFNRRVLFLSVFSCAVFMLSG. A lipid anchor (N-palmitoyl cysteine) is attached at C22. The S-diacylglycerol cysteine moiety is linked to residue C22.

The protein resides in the membrane. This is an uncharacterized protein from Escherichia coli (strain K12).